The following is a 717-amino-acid chain: Polyribonucleotide nucleotidyltransferase (717 aa).

Residues Asp-496 and Asp-502 each coordinate Mg(2+). A KH domain is found at 563-622; the sequence is PRLLTIKIDPDLIGLVIGPGGKTVKGITEQTGTKIDIDDDGTVTISSTDGEQAEKAKRLI. The region spanning 632–700 is the S1 motif domain; it reads GEVYLGRVTR…SKGRLNLTRL (69 aa).

Belongs to the polyribonucleotide nucleotidyltransferase family. The cofactor is Mg(2+).

The protein localises to the cytoplasm. It carries out the reaction RNA(n+1) + phosphate = RNA(n) + a ribonucleoside 5'-diphosphate. Its function is as follows. Involved in mRNA degradation. Catalyzes the phosphorolysis of single-stranded polyribonucleotides processively in the 3'- to 5'-direction. This is Polyribonucleotide nucleotidyltransferase from Microcystis aeruginosa (strain NIES-843 / IAM M-2473).